Here is a 623-residue protein sequence, read N- to C-terminus: UvrABC system protein C (623 aa).

One can recognise a GIY-YIG domain in the interval 12 to 91; the sequence is FSPGVYLYKD…IKQYKPRFNI (80 aa). The UVR domain occupies 201–236; that stretch reads SDLARGLRARMEAASLEMRFEEAAGLRDLITTVEEI. Residues 604 to 623 form a disordered region; sequence PVASVAQSEDAAPDVPDPQA.

This sequence belongs to the UvrC family. In terms of assembly, interacts with UvrB in an incision complex.

The protein resides in the cytoplasm. In terms of biological role, the UvrABC repair system catalyzes the recognition and processing of DNA lesions. UvrC both incises the 5' and 3' sides of the lesion. The N-terminal half is responsible for the 3' incision and the C-terminal half is responsible for the 5' incision. In Solibacter usitatus (strain Ellin6076), this protein is UvrABC system protein C.